A 132-amino-acid chain; its full sequence is Small ribosomal subunit protein uS8 (132 aa).

Belongs to the universal ribosomal protein uS8 family. As to quaternary structure, part of the 30S ribosomal subunit. Contacts proteins S5 and S12.

In terms of biological role, one of the primary rRNA binding proteins, it binds directly to 16S rRNA central domain where it helps coordinate assembly of the platform of the 30S subunit. The protein is Small ribosomal subunit protein uS8 of Maricaulis maris (strain MCS10) (Caulobacter maris).